Reading from the N-terminus, the 297-residue chain is Glycerol-3-phosphate dehydrogenase [NAD(P)+] (297 aa).

The NADPH site is built by tryptophan 11, arginine 33, and lysine 79. Lysine 79, glycine 107, and serine 109 together coordinate sn-glycerol 3-phosphate. Alanine 111 is an NADPH binding site. Residues lysine 161, aspartate 214, serine 224, arginine 225, and asparagine 226 each contribute to the sn-glycerol 3-phosphate site. Residue lysine 161 is the Proton acceptor of the active site. Residue arginine 225 coordinates NADPH. NADPH contacts are provided by valine 249 and glutamate 251.

It belongs to the NAD-dependent glycerol-3-phosphate dehydrogenase family.

The protein resides in the cytoplasm. The catalysed reaction is sn-glycerol 3-phosphate + NAD(+) = dihydroxyacetone phosphate + NADH + H(+). It catalyses the reaction sn-glycerol 3-phosphate + NADP(+) = dihydroxyacetone phosphate + NADPH + H(+). It functions in the pathway membrane lipid metabolism; glycerophospholipid metabolism. Functionally, catalyzes the reduction of the glycolytic intermediate dihydroxyacetone phosphate (DHAP) to sn-glycerol 3-phosphate (G3P), the key precursor for phospholipid synthesis. The sequence is that of Glycerol-3-phosphate dehydrogenase [NAD(P)+] from Campylobacter jejuni subsp. jejuni serotype O:2 (strain ATCC 700819 / NCTC 11168).